A 660-amino-acid chain; its full sequence is Probable Xaa-Pro aminopeptidase PTRG_10574 (660 aa).

Residues Asp-274, Asp-285, Glu-435, and Glu-476 each contribute to the Mn(2+) site. Positions 641 to 660 (SAGSGSTPLWKPHNKQDKKN) are disordered.

The protein belongs to the peptidase M24B family. The cofactor is Mn(2+).

The catalysed reaction is Release of any N-terminal amino acid, including proline, that is linked to proline, even from a dipeptide or tripeptide.. In terms of biological role, catalyzes the removal of a penultimate prolyl residue from the N-termini of peptides. The chain is Probable Xaa-Pro aminopeptidase PTRG_10574 from Pyrenophora tritici-repentis (strain Pt-1C-BFP) (Wheat tan spot fungus).